The chain runs to 192 residues: Probable cobalt-precorrin-6B C(15)-methyltransferase (decarboxylating) (192 aa).

Residues T20, 44–48 (GSGTG), E68, and A96 contribute to the S-adenosyl-L-methionine site.

Belongs to the methyltransferase superfamily. Archaeal-type CbiT family.

The catalysed reaction is Co-precorrin-6B + S-adenosyl-L-methionine = Co-precorrin-7 + S-adenosyl-L-homocysteine + CO2. The protein operates within cofactor biosynthesis; adenosylcobalamin biosynthesis; cob(II)yrinate a,c-diamide from sirohydrochlorin (anaerobic route): step 8/10. Its function is as follows. Catalyzes the methylation of C-15 in cobalt-precorrin-6B followed by the decarboxylation of C-12 to form cobalt-precorrin-7. The protein is Probable cobalt-precorrin-6B C(15)-methyltransferase (decarboxylating) of Sulfurisphaera tokodaii (strain DSM 16993 / JCM 10545 / NBRC 100140 / 7) (Sulfolobus tokodaii).